We begin with the raw amino-acid sequence, 370 residues long: 4-hydroxy-3-methylbut-2-en-1-yl diphosphate synthase (flavodoxin) (370 aa).

[4Fe-4S] cluster contacts are provided by Cys-270, Cys-273, Cys-305, and Glu-312.

Belongs to the IspG family. [4Fe-4S] cluster is required as a cofactor.

The enzyme catalyses (2E)-4-hydroxy-3-methylbut-2-enyl diphosphate + oxidized [flavodoxin] + H2O + 2 H(+) = 2-C-methyl-D-erythritol 2,4-cyclic diphosphate + reduced [flavodoxin]. Its pathway is isoprenoid biosynthesis; isopentenyl diphosphate biosynthesis via DXP pathway; isopentenyl diphosphate from 1-deoxy-D-xylulose 5-phosphate: step 5/6. Converts 2C-methyl-D-erythritol 2,4-cyclodiphosphate (ME-2,4cPP) into 1-hydroxy-2-methyl-2-(E)-butenyl 4-diphosphate. This chain is 4-hydroxy-3-methylbut-2-en-1-yl diphosphate synthase (flavodoxin), found in Hamiltonella defensa subsp. Acyrthosiphon pisum (strain 5AT).